The following is a 74-amino-acid chain: Conotoxin AbVII (74 aa).

The first 17 residues, 1–17, serve as a signal peptide directing secretion; sequence VLIIAVLFLTACQLTTA. Residues 18–40 constitute a propeptide that is removed on maturation; sequence ETSSRGKQKHRALRSTDKNSRMT. The disordered stretch occupies residues 19–41; that stretch reads TSSRGKQKHRALRSTDKNSRMTK. Cystine bridges form between C43-C57, C50-C61, and C56-C68.

Belongs to the conotoxin O1 superfamily. As to expression, expressed by the venom duct.

It localises to the secreted. The protein is Conotoxin AbVII of Conus abbreviatus (Abbreviated cone).